Consider the following 253-residue polypeptide: 5'-nucleotidase SurE (253 aa).

A divalent metal cation-binding residues include aspartate 8, aspartate 9, serine 39, and asparagine 92.

This sequence belongs to the SurE nucleotidase family. Requires a divalent metal cation as cofactor.

It is found in the cytoplasm. It carries out the reaction a ribonucleoside 5'-phosphate + H2O = a ribonucleoside + phosphate. In terms of biological role, nucleotidase that shows phosphatase activity on nucleoside 5'-monophosphates. The sequence is that of 5'-nucleotidase SurE from Burkholderia vietnamiensis (strain G4 / LMG 22486) (Burkholderia cepacia (strain R1808)).